The sequence spans 334 residues: S-adenosylmethionine:tRNA ribosyltransferase-isomerase (334 aa).

Belongs to the QueA family. Monomer.

The protein localises to the cytoplasm. The catalysed reaction is 7-aminomethyl-7-carbaguanosine(34) in tRNA + S-adenosyl-L-methionine = epoxyqueuosine(34) in tRNA + adenine + L-methionine + 2 H(+). It functions in the pathway tRNA modification; tRNA-queuosine biosynthesis. Functionally, transfers and isomerizes the ribose moiety from AdoMet to the 7-aminomethyl group of 7-deazaguanine (preQ1-tRNA) to give epoxyqueuosine (oQ-tRNA). The sequence is that of S-adenosylmethionine:tRNA ribosyltransferase-isomerase from Thermosipho melanesiensis (strain DSM 12029 / CIP 104789 / BI429).